The chain runs to 434 residues: Beta-enolase (434 aa).

A2 bears the N-acetylalanine mark. A Phosphothreonine modification is found at T72. Phosphoserine occurs at positions 83 and 157. H158 and E167 together coordinate substrate. S176 carries the post-translational modification Phosphoserine. T205 bears the Phosphothreonine mark. The active-site Proton donor is the E210. T229 carries the phosphothreonine modification. A Phosphotyrosine modification is found at Y236. D245 is a Mg(2+) binding site. The residue at position 263 (S263) is a Phosphoserine. 2 residues coordinate substrate: E293 and D318. Mg(2+) is bound by residues E293 and D318. K343 serves as the catalytic Proton acceptor. Substrate is bound by residues 370 to 373 and K394; that span reads SHRS.

The protein belongs to the enolase family. As to quaternary structure, mammalian enolase is composed of 3 isozyme subunits, alpha, beta and gamma, which can form homodimers or heterodimers which are cell-type and development-specific. In vitro, interacts with several glycolytic enzymes including PKM, PGM, CKM and ALDO. Also binds PLG and troponin, in vitro. Interacts with PNKD. Mg(2+) is required as a cofactor. As to expression, brain (at protein level). The alpha/alpha homodimer is expressed in embryo and in most adult tissues. The alpha/beta heterodimer and the beta/beta homodimer are found in striated muscle, and the alpha/gamma heterodimer and the gamma/gamma homodimer in neurons. In striated muscle, the fiber-type order of ENO3 expression is IIB &gt; IIX &gt; IIA &gt; I.

It localises to the cytoplasm. The enzyme catalyses (2R)-2-phosphoglycerate = phosphoenolpyruvate + H2O. It participates in carbohydrate degradation; glycolysis; pyruvate from D-glyceraldehyde 3-phosphate: step 4/5. Glycolytic enzyme that catalyzes the conversion of 2-phosphoglycerate to phosphoenolpyruvate. Appears to have a function in striated muscle development and regeneration. This chain is Beta-enolase (Eno3), found in Mus musculus (Mouse).